We begin with the raw amino-acid sequence, 246 residues long: Probable transcriptional regulatory protein HD_0596 (246 aa).

It belongs to the TACO1 family.

The protein localises to the cytoplasm. The chain is Probable transcriptional regulatory protein HD_0596 from Haemophilus ducreyi (strain 35000HP / ATCC 700724).